The following is a 714-amino-acid chain: Polyribonucleotide nucleotidyltransferase (714 aa).

Mg(2+) contacts are provided by Asp-493 and Asp-499. The 60-residue stretch at Pro-559 to Val-618 folds into the KH domain. The S1 motif domain maps to Gly-628 to Arg-696.

It belongs to the polyribonucleotide nucleotidyltransferase family. It depends on Mg(2+) as a cofactor.

The protein resides in the cytoplasm. The enzyme catalyses RNA(n+1) + phosphate = RNA(n) + a ribonucleoside 5'-diphosphate. In terms of biological role, involved in mRNA degradation. Catalyzes the phosphorolysis of single-stranded polyribonucleotides processively in the 3'- to 5'-direction. This chain is Polyribonucleotide nucleotidyltransferase, found in Akkermansia muciniphila (strain ATCC BAA-835 / DSM 22959 / JCM 33894 / BCRC 81048 / CCUG 64013 / CIP 107961 / Muc).